A 247-amino-acid polypeptide reads, in one-letter code: Adenosylcobinamide-GDP ribazoletransferase (247 aa).

Helical transmembrane passes span 34–54 (IITFPLIGLLLGAISGLVFMV), 59–79 (CGVPLAALFSVLVLALMTGGF), 113–133 (GGLALIFVVLAKILVLSELAL), 138–158 (ILASLAAACAVSRGIAALLMY), and 194–214 (VLLPGMHGVAAMVVTMVAIFI).

Belongs to the CobS family. Requires Mg(2+) as cofactor.

Its subcellular location is the cell inner membrane. It catalyses the reaction alpha-ribazole + adenosylcob(III)inamide-GDP = adenosylcob(III)alamin + GMP + H(+). The catalysed reaction is alpha-ribazole 5'-phosphate + adenosylcob(III)inamide-GDP = adenosylcob(III)alamin 5'-phosphate + GMP + H(+). It participates in cofactor biosynthesis; adenosylcobalamin biosynthesis; adenosylcobalamin from cob(II)yrinate a,c-diamide: step 7/7. Joins adenosylcobinamide-GDP and alpha-ribazole to generate adenosylcobalamin (Ado-cobalamin). Also synthesizes adenosylcobalamin 5'-phosphate from adenosylcobinamide-GDP and alpha-ribazole 5'-phosphate. This Shigella dysenteriae serotype 1 (strain Sd197) protein is Adenosylcobinamide-GDP ribazoletransferase.